A 312-amino-acid polypeptide reads, in one-letter code: MVSLTTIEQSPVKCETTTEKESNDTRGTDSNENAETKETKKGFPFHDLAKLQKQYKNKSSRNESLVALIYLLGSMLSFCLLIFFTDFYLIPLFPTTTTMTDYIVFNFYLLNVFVFCMVHFIYHFVKNISLQQHLEHWQKFSYLSNINLLISSQITILYYLFYDYVFFFKIFTLLMNFIGLVAYFFILTDKLISSKRFNKTVFFISVSVVCCSLPLLTAIITFDGLENLKERIKVNAITWELVALVAASIIYVTRFPESLFRRNKKEEGWNHSEYLFHLLISGTAFYHFFILIQSYILMHSSLNQPELINFKS.

The interval 1 to 38 (MVSLTTIEQSPVKCETTTEKESNDTRGTDSNENAETKE) is disordered. At 1-64 (MVSLTTIEQS…YKNKSSRNES (64 aa)) the chain is on the cytoplasmic side. The segment covering 16-38 (TTTEKESNDTRGTDSNENAETKE) has biased composition (basic and acidic residues). A helical membrane pass occupies residues 65–85 (LVALIYLLGSMLSFCLLIFFT). Over 86-101 (DFYLIPLFPTTTTMTD) the chain is Lumenal. The helical transmembrane segment at 102 to 122 (YIVFNFYLLNVFVFCMVHFIY) threads the bilayer. Over 123–141 (HFVKNISLQQHLEHWQKFS) the chain is Cytoplasmic. A helical transmembrane segment spans residues 142–162 (YLSNINLLISSQITILYYLFY). Residues 163-165 (DYV) lie on the Lumenal side of the membrane. Residues 166 to 186 (FFFKIFTLLMNFIGLVAYFFI) traverse the membrane as a helical segment. Residues 187–201 (LTDKLISSKRFNKTV) are Cytoplasmic-facing. A helical transmembrane segment spans residues 202 to 222 (FFISVSVVCCSLPLLTAIITF). Topologically, residues 223 to 231 (DGLENLKER) are lumenal. The chain crosses the membrane as a helical span at residues 232-252 (IKVNAITWELVALVAASIIYV). Residues 253 to 277 (TRFPESLFRRNKKEEGWNHSEYLFH) lie on the Cytoplasmic side of the membrane. Residues 278 to 298 (LLISGTAFYHFFILIQSYILM) form a helical membrane-spanning segment. At 299–312 (HSSLNQPELINFKS) the chain is on the lumenal side.

Belongs to the ADIPOR family.

Its subcellular location is the endoplasmic reticulum membrane. In terms of biological role, ADIPOR-like receptor involved in zinc metabolism either by altering membrane sterol content or by directly altering cellular zinc levels. The sequence is that of ADIPOR-like receptor IZH4 (IZH4) from Saccharomyces cerevisiae (strain ATCC 204508 / S288c) (Baker's yeast).